A 472-amino-acid polypeptide reads, in one-letter code: Selenium-binding protein 2 (472 aa).

S467 carries the phosphoserine modification.

It belongs to the selenium-binding protein family. The N-terminus is blocked. Mainly expressed in liver.

The protein localises to the nucleus. It localises to the cytoplasm. It is found in the cytosol. Its subcellular location is the membrane. Functionally, selenium- and acetaminophen-binding protein which may be involved in the sensing of reactive xenobiotics in the cytoplasm. May be involved in intra-Golgi protein transport. The chain is Selenium-binding protein 2 (Selenbp2) from Mus musculus (Mouse).